We begin with the raw amino-acid sequence, 290 residues long: Fructose-bisphosphate aldolase (290 aa).

Serine 51 lines the D-glyceraldehyde 3-phosphate pocket. Aspartate 86 (proton donor) is an active-site residue. Zn(2+) is bound by residues histidine 87, aspartate 107, glutamate 137, and histidine 179. Residue glycine 180 participates in dihydroxyacetone phosphate binding. Histidine 208 contacts Zn(2+). Residues 209–211 (GGS) and 230–233 (NINT) contribute to the dihydroxyacetone phosphate site.

This sequence belongs to the class II fructose-bisphosphate aldolase family. In terms of assembly, homodimer. It depends on Zn(2+) as a cofactor.

It catalyses the reaction beta-D-fructose 1,6-bisphosphate = D-glyceraldehyde 3-phosphate + dihydroxyacetone phosphate. Its pathway is carbohydrate degradation; glycolysis; D-glyceraldehyde 3-phosphate and glycerone phosphate from D-glucose: step 4/4. Its function is as follows. Catalyzes the aldol condensation of dihydroxyacetone phosphate (DHAP or glycerone-phosphate) with glyceraldehyde 3-phosphate (G3P) to form fructose 1,6-bisphosphate (FBP) in gluconeogenesis and the reverse reaction in glycolysis. The protein is Fructose-bisphosphate aldolase (fba) of Ureaplasma parvum serovar 3 (strain ATCC 700970).